The sequence spans 181 residues: Nucleoside triphosphate/diphosphate phosphatase (181 aa).

Catalysis depends on Arg-26, which acts as the Proton donor. Residues Asn-90, Asp-106, Asp-108, Asp-110, Asp-123, and Glu-126 each coordinate Mg(2+).

This sequence belongs to the Ntdp family. Mg(2+) serves as cofactor.

It carries out the reaction a ribonucleoside 5'-triphosphate + H2O = a ribonucleoside 5'-diphosphate + phosphate + H(+). It catalyses the reaction a ribonucleoside 5'-diphosphate + H2O = a ribonucleoside 5'-phosphate + phosphate + H(+). Has nucleoside phosphatase activity towards nucleoside triphosphates and nucleoside diphosphates. The sequence is that of Nucleoside triphosphate/diphosphate phosphatase from Ligilactobacillus salivarius (strain UCC118) (Lactobacillus salivarius).